A 107-amino-acid polypeptide reads, in one-letter code: HTH-type transcriptional regulator Rv2034 (107 aa).

Positions 1-93 constitute an HTH arsR-type domain; that stretch reads MSTYRSPDRA…DLDRFWTRAL (93 aa). Positions 33–56 form a DNA-binding region, H-T-H motif; the sequence is VGELARDLPVSRPAVSQHLKVLKT.

In terms of assembly, homodimer.

Its activity is regulated as follows. DNA-binding ability is not susceptible to zinc, nickel, cobalt, cadmium, lead, copper and manganese ions. In terms of biological role, involved in the regulation of lipid metabolism and hypoxic response. Positively regulates transcription of various genes, such as phoP, groEL2 and dosR. Negatively regulates its own transcription. Acts by binding to a specific palindromic sequence motif in promoter regions. In Mycobacterium tuberculosis (strain ATCC 25618 / H37Rv), this protein is HTH-type transcriptional regulator Rv2034.